Here is a 182-residue protein sequence, read N- to C-terminus: Crossover junction endodeoxyribonuclease RuvC (182 aa).

Catalysis depends on residues aspartate 7, glutamate 69, and aspartate 141. Mg(2+) contacts are provided by aspartate 7, glutamate 69, and aspartate 141.

It belongs to the RuvC family. As to quaternary structure, homodimer which binds Holliday junction (HJ) DNA. The HJ becomes 2-fold symmetrical on binding to RuvC with unstacked arms; it has a different conformation from HJ DNA in complex with RuvA. In the full resolvosome a probable DNA-RuvA(4)-RuvB(12)-RuvC(2) complex forms which resolves the HJ. Requires Mg(2+) as cofactor.

It is found in the cytoplasm. The enzyme catalyses Endonucleolytic cleavage at a junction such as a reciprocal single-stranded crossover between two homologous DNA duplexes (Holliday junction).. Functionally, the RuvA-RuvB-RuvC complex processes Holliday junction (HJ) DNA during genetic recombination and DNA repair. Endonuclease that resolves HJ intermediates. Cleaves cruciform DNA by making single-stranded nicks across the HJ at symmetrical positions within the homologous arms, yielding a 5'-phosphate and a 3'-hydroxyl group; requires a central core of homology in the junction. The consensus cleavage sequence is 5'-(A/T)TT(C/G)-3'. Cleavage occurs on the 3'-side of the TT dinucleotide at the point of strand exchange. HJ branch migration catalyzed by RuvA-RuvB allows RuvC to scan DNA until it finds its consensus sequence, where it cleaves and resolves the cruciform DNA. The protein is Crossover junction endodeoxyribonuclease RuvC of Albidiferax ferrireducens (strain ATCC BAA-621 / DSM 15236 / T118) (Rhodoferax ferrireducens).